The chain runs to 84 residues: Small ribosomal subunit protein bS18A (84 aa).

The protein belongs to the bacterial ribosomal protein bS18 family. As to quaternary structure, part of the 30S ribosomal subunit. Forms a tight heterodimer with protein bS6.

Its function is as follows. Binds as a heterodimer with protein bS6 to the central domain of the 16S rRNA, where it helps stabilize the platform of the 30S subunit. The sequence is that of Small ribosomal subunit protein bS18A from Mycobacterium marinum (strain ATCC BAA-535 / M).